Here is a 126-residue protein sequence, read N- to C-terminus: Small ribosomal subunit protein uS13 (126 aa).

Residues 95–126 form a disordered region; sequence GMPVRGQRTRTNARTRRGRRGQAIGIKKKVKK.

It belongs to the universal ribosomal protein uS13 family. In terms of assembly, part of the 30S ribosomal subunit. Forms a loose heterodimer with protein S19. Forms two bridges to the 50S subunit in the 70S ribosome.

In terms of biological role, located at the top of the head of the 30S subunit, it contacts several helices of the 16S rRNA. In the 70S ribosome it contacts the 23S rRNA (bridge B1a) and protein L5 of the 50S subunit (bridge B1b), connecting the 2 subunits; these bridges are implicated in subunit movement. Contacts the tRNAs in the A and P-sites. This is Small ribosomal subunit protein uS13 from Chloroflexus aggregans (strain MD-66 / DSM 9485).